The primary structure comprises 382 residues: Intermediate transcription factor 3 large subunit (382 aa).

It belongs to the orthopoxvirus OPG150 family. Heterodimerizes with protein A8 to form the virus intermediate transcription factor (VITF)-3.

In terms of biological role, acts with RNA polymerase to initiate transcription from intermediate gene promoters. The sequence is that of Intermediate transcription factor 3 large subunit (OPG150) from Cynomys gunnisoni (Gunnison's prairie dog).